The following is a 269-amino-acid chain: Phosphate import ATP-binding protein PstB (269 aa).

In terms of domain architecture, ABC transporter spans 14 to 253 (LTLEDVSISY…EFDSTKKIFS (240 aa)). 46–53 (GPSGCGKS) provides a ligand contact to ATP.

It belongs to the ABC transporter superfamily. Phosphate importer (TC 3.A.1.7) family. The complex is composed of two ATP-binding proteins (PstB), two transmembrane proteins (PstC and PstA) and a solute-binding protein (PstS).

The protein localises to the cell inner membrane. The catalysed reaction is phosphate(out) + ATP + H2O = ADP + 2 phosphate(in) + H(+). In terms of biological role, part of the ABC transporter complex PstSACB involved in phosphate import. Responsible for energy coupling to the transport system. This Prochlorococcus marinus subsp. pastoris (strain CCMP1986 / NIES-2087 / MED4) protein is Phosphate import ATP-binding protein PstB.